A 2210-amino-acid polypeptide reads, in one-letter code: RNA-directed RNA polymerase L (2210 aa).

Residues 26–285 (KAIFLSQTKL…KCAIMSEEDS (260 aa)) are endonuclease. Positions 51, 88, and 101 each coordinate Mn(2+). Lys114 is an active-site residue. Positions 1163–1359 (LDMKSVVRQG…FLSDKLNKFV (197 aa)) constitute a RdRp catalytic domain. Asp1319 contributes to the Mg(2+) binding site.

Belongs to the Bunyavirales RNA polymerase family. In terms of assembly, homomultimer; the oligomeric structure is essential for the polymerase activity. Interacts with nucleoprotein N. Interacts with protein Z; this interaction inhibits viral transcription and replication, Z partially blocks the product exit tunnel for the releasing nascent RNA product. Requires Mn(2+) as cofactor. Mg(2+) is required as a cofactor.

The protein resides in the virion. It localises to the host cytoplasm. The enzyme catalyses RNA(n) + a ribonucleoside 5'-triphosphate = RNA(n+1) + diphosphate. RNA-dependent RNA polymerase, which is responsible for the replication and transcription of the viral RNA genome using antigenomic RNA as an intermediate. During transcription, synthesizes subgenomic RNAs and assures their capping by a cap-snatching mechanism, which involves the endonuclease activity cleaving the host capped pre-mRNAs. These short capped RNAs are then used as primers for viral transcription. The 3'-end of subgenomic mRNAs molecules are heterogeneous and not polyadenylated. The replicase function is to direct synthesis of antigenomic and genomic RNA which are encapsidated and non capped. As a consequence of the use of the same enzyme for both transcription and replication, these mechanisms need to be well coordinated. These processes may be regulated by proteins N and Z in a dose-dependent manner. Z protein inhibits the viral polymerase L und thus the viral transcription and RNA synthesis. This is RNA-directed RNA polymerase L from Sigmodon alstoni (PIRV).